Here is a 384-residue protein sequence, read N- to C-terminus: Carbamoyl phosphate synthase small chain (384 aa).

Positions 1-193 (MTKPATTPAI…DSHPEIPASE (193 aa)) are CPSase. Positions 51, 245, and 247 each coordinate L-glutamine. Positions 197–384 (HVVAYDYGVK…ISAMAPVVDR (188 aa)) constitute a Glutamine amidotransferase type-1 domain. Catalysis depends on cysteine 273, which acts as the Nucleophile. L-glutamine contacts are provided by leucine 274, glutamine 277, asparagine 315, glycine 317, and phenylalanine 318. Residues histidine 357 and glutamate 359 contribute to the active site.

Belongs to the CarA family. In terms of assembly, composed of two chains; the small (or glutamine) chain promotes the hydrolysis of glutamine to ammonia, which is used by the large (or ammonia) chain to synthesize carbamoyl phosphate. Tetramer of heterodimers (alpha,beta)4.

It catalyses the reaction hydrogencarbonate + L-glutamine + 2 ATP + H2O = carbamoyl phosphate + L-glutamate + 2 ADP + phosphate + 2 H(+). The catalysed reaction is L-glutamine + H2O = L-glutamate + NH4(+). The protein operates within amino-acid biosynthesis; L-arginine biosynthesis; carbamoyl phosphate from bicarbonate: step 1/1. It functions in the pathway pyrimidine metabolism; UMP biosynthesis via de novo pathway; (S)-dihydroorotate from bicarbonate: step 1/3. Small subunit of the glutamine-dependent carbamoyl phosphate synthetase (CPSase). CPSase catalyzes the formation of carbamoyl phosphate from the ammonia moiety of glutamine, carbonate, and phosphate donated by ATP, constituting the first step of 2 biosynthetic pathways, one leading to arginine and/or urea and the other to pyrimidine nucleotides. The small subunit (glutamine amidotransferase) binds and cleaves glutamine to supply the large subunit with the substrate ammonia. In Stutzerimonas stutzeri (Pseudomonas stutzeri), this protein is Carbamoyl phosphate synthase small chain.